The chain runs to 241 residues: tRNA pseudouridine synthase B (241 aa).

The Nucleophile role is filled by aspartate 52.

It belongs to the pseudouridine synthase TruB family. Type 1 subfamily.

It catalyses the reaction uridine(55) in tRNA = pseudouridine(55) in tRNA. Functionally, responsible for synthesis of pseudouridine from uracil-55 in the psi GC loop of transfer RNAs. The polypeptide is tRNA pseudouridine synthase B (Chloroherpeton thalassium (strain ATCC 35110 / GB-78)).